Reading from the N-terminus, the 353-residue chain is UDP-3-O-acylglucosamine N-acyltransferase (353 aa).

H246 (proton acceptor) is an active-site residue.

This sequence belongs to the transferase hexapeptide repeat family. LpxD subfamily. Homotrimer.

It catalyses the reaction a UDP-3-O-[(3R)-3-hydroxyacyl]-alpha-D-glucosamine + a (3R)-hydroxyacyl-[ACP] = a UDP-2-N,3-O-bis[(3R)-3-hydroxyacyl]-alpha-D-glucosamine + holo-[ACP] + H(+). It functions in the pathway bacterial outer membrane biogenesis; LPS lipid A biosynthesis. Catalyzes the N-acylation of UDP-3-O-acylglucosamine using 3-hydroxyacyl-ACP as the acyl donor. Is involved in the biosynthesis of lipid A, a phosphorylated glycolipid that anchors the lipopolysaccharide to the outer membrane of the cell. This Chlorobaculum tepidum (strain ATCC 49652 / DSM 12025 / NBRC 103806 / TLS) (Chlorobium tepidum) protein is UDP-3-O-acylglucosamine N-acyltransferase.